The primary structure comprises 211 residues: Transcription antitermination protein NusB (211 aa).

This sequence belongs to the NusB family.

Its function is as follows. Involved in transcription antitermination. Required for transcription of ribosomal RNA (rRNA) genes. Binds specifically to the boxA antiterminator sequence of the ribosomal RNA (rrn) operons. This Gloeobacter violaceus (strain ATCC 29082 / PCC 7421) protein is Transcription antitermination protein NusB.